We begin with the raw amino-acid sequence, 430 residues long: MLGSSAHGPAAREAGSAVTLQQTAFQEDQENVNPEKAAPAQQPRTRAGLAVLRAGNSRGPAPQRPKTRRVAPLKDLPINDEYVPVPPWKANNKQPAFTIHVDEAEEEIQKRPTESKKSESEDVLAFNSAVTLPGPRKPLAPLDYPMDGSFESPHTMEMSVVLEDEKPVSVNEVPDYHEDIHTYLREMEVKCKPKVGYMKKQPDITNSMRAILVDWLVEVGEEYKLQNETLHLAVNYIDRFLSSMSVLRGKLQLVGTAAMLLASKFEEIYPPEVAEFVYITDDTYTKKQVLRMEHLVLKVLAFDLAAPTINQFLTQYFLHQQPANCKVESLAMFLGELSLIDADPYLKYLPSVIAAAAFHLALYTVTGQSWPESLVQKTGYTLETLKPCLLDLHQTYLRAPQHAQQSIREKYKNSKYHGVSLLNPPETLNV.

M1 is modified (N-acetylmethionine). Disordered stretches follow at residues 1-80 (MLGS…PIND) and 106-129 (EEIQKRPTESKKSESEDVLAFNSA). At S5 the chain carries Phosphoserine. A compositionally biased stretch (basic and acidic residues) spans 107 to 120 (EIQKRPTESKKSES).

The protein belongs to the cyclin family. Cyclin AB subfamily. In terms of assembly, interacts with the CDK1 and CDK2 protein kinases to form serine/threonine kinase holoenzyme complexes. Interacts with CDK1 (hyperphosphorylated form in G1 and underphosphorylated forms in S and G2). Interacts with CDK2; the interaction increases from G1 to G2. Interacts (associated with CDK2 but not with CDK1) with SCAPER; regulates the activity of CCNA2/CDK2 by transiently maintaining CCNA2 in the cytoplasm. Forms a ternary complex with CDK2 and CDKN1B; CDKN1B inhibits the kinase activity of CDK2 through conformational rearrangements. Interacts with INCA1. In terms of processing, polyubiquitinated via 'Lys-11'-linked ubiquitin by the anaphase-promoting complex (APC/C), leading to its degradation by the proteasome. Deubiquitinated and stabilized by USP37 enables entry into S phase. Ubiquitinated during the G1 phase by the SCF(FBXO31) complex, leading to its proteasomal degradation.

The protein localises to the nucleus. The protein resides in the cytoplasm. Cyclin which controls both the G1/S and the G2/M transition phases of the cell cycle. Functions through the formation of specific serine/threonine kinase holoenzyme complexes with the cyclin-dependent protein kinases CDK1 and CDK2. The cyclin subunit confers the substrate specificity of these complexes and differentially interacts with and activates CDK1 and CDK2 throughout the cell cycle. This is Cyclin-A2 from Bos taurus (Bovine).